A 388-amino-acid polypeptide reads, in one-letter code: Chorismate synthase (388 aa).

Positions 39 and 45 each coordinate NADP(+). The disordered stretch occupies residues 95–118; it reads EKNEKSRRVSRPRPGHADLVGGMK. FMN contacts are provided by residues 130–132, 251–252, G296, 311–315, and R337; these read RSS, NA, and KPIPT.

Belongs to the chorismate synthase family. Homotetramer. It depends on FMNH2 as a cofactor.

It carries out the reaction 5-O-(1-carboxyvinyl)-3-phosphoshikimate = chorismate + phosphate. It functions in the pathway metabolic intermediate biosynthesis; chorismate biosynthesis; chorismate from D-erythrose 4-phosphate and phosphoenolpyruvate: step 7/7. Functionally, catalyzes the anti-1,4-elimination of the C-3 phosphate and the C-6 proR hydrogen from 5-enolpyruvylshikimate-3-phosphate (EPSP) to yield chorismate, which is the branch point compound that serves as the starting substrate for the three terminal pathways of aromatic amino acid biosynthesis. This reaction introduces a second double bond into the aromatic ring system. The protein is Chorismate synthase of Listeria monocytogenes serovar 1/2a (strain ATCC BAA-679 / EGD-e).